Consider the following 417-residue polypeptide: Adenylosuccinate synthetase (417 aa).

GTP is bound by residues 11–17 (GDEGKGK) and 39–41 (GHT). Aspartate 12 acts as the Proton acceptor in catalysis. Positions 12 and 39 each coordinate Mg(2+). IMP-binding positions include 12-15 (DEGK), 37-40 (NAGH), threonine 126, arginine 140, glutamine 218, threonine 233, and arginine 295. The Proton donor role is filled by histidine 40. 291–297 (TVSGRIR) lines the substrate pocket. Residues arginine 297, 323–325 (KLD), and 406–408 (SNG) each bind GTP.

The protein belongs to the adenylosuccinate synthetase family. In terms of assembly, homodimer. The cofactor is Mg(2+).

The protein resides in the cytoplasm. The catalysed reaction is IMP + L-aspartate + GTP = N(6)-(1,2-dicarboxyethyl)-AMP + GDP + phosphate + 2 H(+). It functions in the pathway purine metabolism; AMP biosynthesis via de novo pathway; AMP from IMP: step 1/2. Its function is as follows. Plays an important role in the de novo pathway of purine nucleotide biosynthesis. Catalyzes the first committed step in the biosynthesis of AMP from IMP. The sequence is that of Adenylosuccinate synthetase from Neorickettsia sennetsu (strain ATCC VR-367 / Miyayama) (Ehrlichia sennetsu).